Consider the following 455-residue polypeptide: Squamosa promoter-binding-like protein 16 (455 aa).

Residues 115 to 192 (CPSCAVDGCK…DGHNRRRRKP (78 aa)) form an SBP-type zinc finger. Residues C118, C123, C140, H143, C159, C162, H166, and C178 each coordinate Zn(2+). The short motif at 175–191 (KRSCRKRLDGHNRRRRK) is the Bipartite nuclear localization signal element. The segment at 182-204 (LDGHNRRRRKPQPDPMNSASYLA) is disordered.

Expressed in young panicles.

It localises to the nucleus. Functionally, trans-acting factor that binds specifically to the consensus nucleotide sequence 5'-TNCGTACAA-3'. May be involved in panicle development. In Oryza sativa subsp. japonica (Rice), this protein is Squamosa promoter-binding-like protein 16 (SPL16).